Reading from the N-terminus, the 356-residue chain is Pavine N-methyltransferase (356 aa).

Phe-96, Ser-97, Gly-135, Asn-159, Gln-163, Asp-185, Val-186, and Val-201 together coordinate S-adenosyl-L-homocysteine. The S-adenosyl-L-methionine site is built by Phe-96, Ser-97, Gly-135, Asn-159, Gln-163, Asp-185, Val-186, and Val-201. (S)-tetrahydropapaverine is bound at residue Glu-205. The active site involves Cys-331.

It belongs to the CFA/CMAS family. In terms of assembly, homodimer.

It localises to the cytoplasm. It catalyses the reaction (+-)-pavine + S-adenosyl-L-methionine = N-methylpavine + S-adenosyl-L-homocysteine + H(+). The enzyme catalyses (S)-reticuline + S-adenosyl-L-methionine = (S)-tembetarine + S-adenosyl-L-homocysteine + H(+). The catalysed reaction is (S)-stylopine + S-adenosyl-L-methionine = (S)-cis-N-methylstylopine + S-adenosyl-L-homocysteine. It carries out the reaction (S)-scoulerine + S-adenosyl-L-methionine = (S)-cis-N-methylscoulerine + S-adenosyl-L-homocysteine. It catalyses the reaction (S)-tetrahydropapaverine + S-adenosyl-L-methionine = (S)-N-methyltetrahydropapaverine + S-adenosyl-L-homocysteine + H(+). The enzyme catalyses (S)-tetrahydropalmatine + S-adenosyl-L-methionine = (S)-cis-N-methyltetrahydropalmatine + S-adenosyl-L-homocysteine. The protein operates within alkaloid biosynthesis. Its activity is regulated as follows. In the presence of a racemic mixture of tetrahydropapaverine (THP), one molecule of (S)-THP binds in a productive mode, while one molecule of (R)-THP is bound next to it in a non-productive mode. The (R)-THP seems to inhibit the release of products from the enzyme when higher concentrations of the racemic substrate are added to the reaction. Its function is as follows. N-methyltransferase with a substrate preference for (+-)-pavine and (S)-reticuline, but also active with the protoberberines scoulerine and stylopine and, to a lesser extent, tetrahydropapaverine (THP) and tetrahydropalmatine. Is not active on (R)-reticuline, cryptopine, glaucine, codeine, canadaline, noscapine and berbamine. The chain is Pavine N-methyltransferase from Thalictrum flavum subsp. glaucum (Yellow meadow rue).